Here is a 333-residue protein sequence, read N- to C-terminus: MDGLRTDGGAAGAAPASSSSSSSVAAAAPGQCRGFLSAPVFAGTHSGRAAAAAAAAAAAAAAASGFAYPGTSERAGSASSSSSSAVVAARPEAPSAKECPAPGTAATAPPGAPALGYGYHFGNGYYSCRMSHGVGLQQNALKSSPHSSLGGFPVEKYMDVSGLASSSVPANEVPARAKEVSFYQGYTSPYQHVPGYIDMVSTFGSGEPRHEAYISMEGYQSWTLANGWNSQVYCAKDQPQGSHFWKSSFPGDVALNQPDMCVYRRGRKKRVPYTKLQLKELENEYAINKFINKDKRRRISAATNLSERQVTIWFQNRRVKDKKIVSKLKDTVS.

The disordered stretch occupies residues 1–24 (MDGLRTDGGAAGAAPASSSSSSSV). Low complexity predominate over residues 12–24 (GAAPASSSSSSSV). A DNA-binding region (homeobox) is located at residues 266 to 325 (GRKKRVPYTKLQLKELENEYAINKFINKDKRRRISAATNLSERQVTIWFQNRRVKDKKIV).

It belongs to the Abd-B homeobox family.

It is found in the nucleus. Sequence-specific transcription factor that binds gene promoters and activates their transcription. Part of a developmental regulatory system that provides cells with specific positional identities on the anterior-posterior axis. The sequence is that of Homeobox protein Hox-D13 (HOXD13) from Carollia perspicillata (Seba's short-tailed bat).